A 49-amino-acid chain; its full sequence is U6-myrmicitoxin-Mri1a (49 aa).

The first 27 residues, 1–27 (MNPKALCSFLLATFLLLTVTIMPSVHA), serve as a signal peptide directing secretion. Residues 28 to 35 (NAEANADA) constitute a propeptide that is removed on maturation.

In terms of processing, contains 1 disulfide bond. As to expression, expressed by the venom gland.

Its subcellular location is the secreted. The polypeptide is U6-myrmicitoxin-Mri1a (Manica rubida (European giant red ant)).